The following is a 106-amino-acid chain: Nucleoid-associated protein XC_3243 (106 aa).

The interval 82 to 106 (DAESKERMGSATAGMQLPPGMKLPF) is disordered.

Belongs to the YbaB/EbfC family. Homodimer.

It is found in the cytoplasm. The protein resides in the nucleoid. Functionally, binds to DNA and alters its conformation. May be involved in regulation of gene expression, nucleoid organization and DNA protection. This is Nucleoid-associated protein XC_3243 from Xanthomonas campestris pv. campestris (strain 8004).